A 799-amino-acid polypeptide reads, in one-letter code: Zinc finger protein 227 (799 aa).

The 72-residue stretch at 23 to 94 (VTFKDVAVVF…ETETQRSSKH (72 aa)) folds into the KRAB domain. 19 consecutive C2H2-type zinc fingers follow at residues 250-272 (HPCGECGRGFSYSPRLPLHPNVH), 269-291 (PNVHTGEKCFSQSSHLRTHQRIH), 324-346 (YRCDSCGKGFSSSTGLIIHYRTH), 352-374 (YKCEECGKCFSQSSNFQCHQRVH), 380-402 (YKCEECGKGFGWSVNLRVHQRVH), 408-430 (YKCEECGKGFTQAAHFHIHQRVH), 436-458 (YKCDVCGKGFSHNSPLICHRRVH), 464-486 (YKCEACGKGFTRNTDLHIHFRVH), 492-514 (YKCKECGKGFSQASNLQVHQNVH), 520-542 (FKCETCGKGFSQSSKLQTHQRVH), 548-570 (YRCDVCGKDFSYSSNLKLHQVIH), 576-598 (YKCEECGKGFSWRSNLHAHQRVH), 604-626 (YKCEQCDKSFSQAIDFRVHQRVH), 632-654 (YKCGVCGKGFSQSSGLQSHQRVH), 660-682 (YKCDVCGKGFRYSSQFIYHQRGH), 688-710 (YKCEECGKGFGRSLNLRHHQRVH), 716-738 (HICEECGKAFSLPSNLRVHLGVH), 744-766 (FKCEECGKGFSQSARLEAHQRVH), and 772-794 (YKCDICDKDFRHRSRLTYHQKVH).

Belongs to the krueppel C2H2-type zinc-finger protein family.

It is found in the nucleus. May be involved in transcriptional regulation. This Homo sapiens (Human) protein is Zinc finger protein 227 (ZNF227).